Here is a 109-residue protein sequence, read N- to C-terminus: Spermidine export protein MdtI (109 aa).

4 helical membrane passes run 6–26, 36–56, 64–84, and 88–108; these read WIHAAWLAFAIVLEIIANVFL, WFGLLSIAAVLGAFSALSQAV, AYALWGGFGIAATLAAGWVLF, and LNRKGWIGLVLLLAGMVMIKL.

The protein belongs to the drug/metabolite transporter (DMT) superfamily. Small multidrug resistance (SMR) (TC 2.A.7.1) family. MdtI subfamily. Forms a complex with MdtJ.

Its subcellular location is the cell inner membrane. In terms of biological role, catalyzes the excretion of spermidine. The polypeptide is Spermidine export protein MdtI (Enterobacter sp. (strain 638)).